The following is a 500-amino-acid chain: Cytochrome P450 71D13 (500 aa).

The helical; Signal-anchor for type II membrane protein transmembrane segment at leucine 3–isoleucine 23 threads the bilayer. Residue cysteine 439 participates in heme binding.

This sequence belongs to the cytochrome P450 family. It depends on heme as a cofactor.

The protein resides in the endoplasmic reticulum membrane. It catalyses the reaction (4S)-limonene + reduced [NADPH--hemoprotein reductase] + O2 = (1S,6R)-isopiperitenol + oxidized [NADPH--hemoprotein reductase] + H2O + H(+). In terms of biological role, hydroxylates (-)-(4S)-limonene to (-)-trans-isopiperitenol, a precursor of (-)-menthol, responsible for the cooling sensation of peppermint. The polypeptide is Cytochrome P450 71D13 (CYP71D13) (Mentha piperita (Peppermint)).